The primary structure comprises 544 residues: Chitin-inducible gibberellin-responsive protein 2 (544 aa).

The disordered stretch occupies residues 1–123 (MADTPTSRMI…VGASCVTEDP (123 aa)). Polar residues-rich tracts occupy residues 15-30 (NIPS…SDNP), 63-74 (SQATPNKYTLDS), and 86-101 (PSSQ…PLSQ). The region spanning 165–544 (RMMGIPRGNL…RPLVVSSAWH (380 aa)) is the GRAS domain. Positions 172 to 232 (GNLKELLIAC…VARLASSGIS (61 aa)) are leucine repeat I (LRI). The tract at residues 251–316 (MHFLYEACPY…GGPPTVRITG (66 aa)) is VHIID. Residues 282–286 (IHIID) carry the VHIID motif. The interval 332 to 364 (LVGRRLSHIASLCKVPFEFHPLAISGSKVEAAH) is leucine repeat II (LRII). A PFYRE region spans residues 373 to 467 (LAVNFTLELH…QHCLAREIVN (95 aa)). The interval 470–544 (ACEGEERAER…RPLVVSSAWH (75 aa)) is SAW.

Belongs to the GRAS family.

It localises to the nucleus. Its function is as follows. May play a regulatory role in the early step of oligosaccharide elicitor response, downstream of the membrane-associated high-affinity chitin-binding protein. The sequence is that of Chitin-inducible gibberellin-responsive protein 2 (CIGR2) from Oryza sativa subsp. japonica (Rice).